Here is a 159-residue protein sequence, read N- to C-terminus: MEKLSSKDKELIRGSWDSLGKNKVPHGVILFSRLFELDPELLNLFHYTTNCGSTQDCLSSPEFLEHVTKVMLVIDAAVSHLDDLHSLEDFLLNLGRKHQAVGVKPQSFAMVGESLLYMLQCSLGQAYTASLRQAWLNMYSVVVASMSRGWAKNGEDKAD.

The Globin domain occupies 3-151; sequence KLSSKDKELI…VVASMSRGWA (149 aa). Residues His-66 and His-98 each coordinate heme b.

This sequence belongs to the globin family. As to quaternary structure, monomer. Homodimers and homotetramers. Mainly monomeric but also detected as part of homodimers and homotetramers.

The protein resides in the cytoplasm. It is found in the cytosol. Its subcellular location is the mitochondrion matrix. The catalysed reaction is Fe(III)-heme b-[protein] + nitric oxide + H2O = Fe(II)-heme b-[protein] + nitrite + 2 H(+). In terms of biological role, monomeric globin with a bis-histidyl six-coordinate heme-iron atom through which it can bind dioxygen, carbon monoxide and nitric oxide. Could help transport oxygen and increase its availability to the metabolically active neuronal tissues, though its low quantity in tissues as well as its high affinity for dioxygen, which may limit its oxygen-releasing ability, argue against it. The ferrous/deoxygenated form exhibits a nitrite reductase activity and it could produce nitric oxide which in turn inhibits cellular respiration in response to hypoxia. In its ferrous/deoxygenated state, it may also exhibit GDI (Guanine nucleotide Dissociation Inhibitor) activity toward heterotrimeric G-alpha proteins, thereby regulating signal transduction to facilitate neuroprotective responses in the wake of hypoxia and associated oxidative stress. This is Neuroglobin (ngb) from Tetraodon nigroviridis (Spotted green pufferfish).